A 151-amino-acid chain; its full sequence is Ribosome maturation factor RimP (151 aa).

Belongs to the RimP family.

It localises to the cytoplasm. Its function is as follows. Required for maturation of 30S ribosomal subunits. This Vibrio atlanticus (strain LGP32) (Vibrio splendidus (strain Mel32)) protein is Ribosome maturation factor RimP.